Here is a 1054-residue protein sequence, read N- to C-terminus: Translation initiation factor IF-2 (1054 aa).

Disordered regions lie at residues Asp-57–Cys-213, Asp-225–Asp-248, Ser-287–Gln-315, and Asp-401–Leu-436. The segment covering Gln-92–Pro-104 has biased composition (polar residues). The segment covering Glu-111–Cys-213 has biased composition (low complexity). The span at Asp-401–Lys-418 shows a compositional bias: basic and acidic residues. Residues Thr-552–Thr-721 form the tr-type G domain. The segment at Gly-561–Thr-568 is G1. Gly-561–Thr-568 serves as a coordination point for GTP. The segment at Gly-586–His-590 is G2. The interval Asp-607 to Gly-610 is G3. Residues Asp-607–His-611 and Asn-661–Asp-664 each bind GTP. Positions Asn-661–Asp-664 are G4. The tract at residues Ser-697–Lys-699 is G5.

The protein belongs to the TRAFAC class translation factor GTPase superfamily. Classic translation factor GTPase family. IF-2 subfamily.

Its subcellular location is the cytoplasm. One of the essential components for the initiation of protein synthesis. Protects formylmethionyl-tRNA from spontaneous hydrolysis and promotes its binding to the 30S ribosomal subunits. Also involved in the hydrolysis of GTP during the formation of the 70S ribosomal complex. The protein is Translation initiation factor IF-2 (infB) of Stigmatella aurantiaca.